We begin with the raw amino-acid sequence, 543 residues long: CTP synthase (543 aa).

Residues 1-265 form an amidoligase domain region; that stretch reads MARYIFITGG…DDEVLAAFAI (265 aa). CTP is bound at residue serine 13. Serine 13 provides a ligand contact to UTP. 14–19 contacts ATP; that stretch reads SLGKGL. Tyrosine 54 provides a ligand contact to L-glutamine. Aspartate 71 is a binding site for ATP. Residues aspartate 71 and glutamate 139 each contribute to the Mg(2+) site. CTP-binding positions include 146 to 148, 186 to 191, and lysine 222; these read DIE and KTKPTQ. Residues 186–191 and lysine 222 contribute to the UTP site; that span reads KTKPTQ. 238 to 240 contributes to the ATP binding site; that stretch reads RDA. The 252-residue stretch at 291 to 542 folds into the Glutamine amidotransferase type-1 domain; it reads TIAIVGKYTG…VQAALVQSRL (252 aa). Position 353 (glycine 353) interacts with L-glutamine. Catalysis depends on cysteine 380, which acts as the Nucleophile; for glutamine hydrolysis. L-glutamine contacts are provided by residues 381-384, glutamate 404, and arginine 470; that span reads FGMQ. Residues histidine 515 and glutamate 517 contribute to the active site.

Belongs to the CTP synthase family. Homotetramer.

The enzyme catalyses UTP + L-glutamine + ATP + H2O = CTP + L-glutamate + ADP + phosphate + 2 H(+). The catalysed reaction is L-glutamine + H2O = L-glutamate + NH4(+). It catalyses the reaction UTP + NH4(+) + ATP = CTP + ADP + phosphate + 2 H(+). The protein operates within pyrimidine metabolism; CTP biosynthesis via de novo pathway; CTP from UDP: step 2/2. Allosterically activated by GTP, when glutamine is the substrate; GTP has no effect on the reaction when ammonia is the substrate. The allosteric effector GTP functions by stabilizing the protein conformation that binds the tetrahedral intermediate(s) formed during glutamine hydrolysis. Inhibited by the product CTP, via allosteric rather than competitive inhibition. Its function is as follows. Catalyzes the ATP-dependent amination of UTP to CTP with either L-glutamine or ammonia as the source of nitrogen. Regulates intracellular CTP levels through interactions with the four ribonucleotide triphosphates. The chain is CTP synthase from Rhodopseudomonas palustris (strain ATCC BAA-98 / CGA009).